The primary structure comprises 388 residues: Putative nickel insertion protein (388 aa).

It belongs to the LarC family.

The protein is Putative nickel insertion protein of Geobacter sulfurreducens (strain ATCC 51573 / DSM 12127 / PCA).